The sequence spans 166 residues: Phosphopantetheine adenylyltransferase (166 aa).

A substrate-binding site is contributed by Ser-11. Residues 11–12 (SF) and His-19 each bind ATP. Substrate-binding residues include Lys-43, Ala-76, and Arg-90. ATP is bound by residues 91–93 (GLR), Glu-101, and 126–132 (YRYFSSS).

Belongs to the bacterial CoaD family. As to quaternary structure, homohexamer. Mg(2+) is required as a cofactor.

Its subcellular location is the cytoplasm. It carries out the reaction (R)-4'-phosphopantetheine + ATP + H(+) = 3'-dephospho-CoA + diphosphate. It functions in the pathway cofactor biosynthesis; coenzyme A biosynthesis; CoA from (R)-pantothenate: step 4/5. Reversibly transfers an adenylyl group from ATP to 4'-phosphopantetheine, yielding dephospho-CoA (dPCoA) and pyrophosphate. The chain is Phosphopantetheine adenylyltransferase from Streptococcus mutans serotype c (strain ATCC 700610 / UA159).